We begin with the raw amino-acid sequence, 200 residues long: Mediator of RNA polymerase II transcription subunit 22 (200 aa).

Residues 93-122 (SVNEAIDQRNQQLRALQEECDRKLITLRDE) are a coiled coil. Residues 167-200 (SAPLLASPETGAGPLQSAAPVHSHGGGPGPTEHT) are disordered. Residues 190–200 (HGGGPGPTEHT) are compositionally biased toward gly residues.

It belongs to the Mediator complex subunit 22 family. Component of the Mediator complex, which is composed of MED1, MED4, MED6, MED7, MED8, MED9, MED10, MED11, MED12, MED13, MED13L, MED14, MED15, MED16, MED17, MED18, MED19, MED20, MED21, MED22, MED23, MED24, MED25, MED26, MED27, MED29, MED30, MED31, CCNC, CDK8 and CDC2L6/CDK11. The MED12, MED13, CCNC and CDK8 subunits form a distinct module termed the CDK8 module. Mediator containing the CDK8 module is less active than Mediator lacking this module in supporting transcriptional activation. Individual preparations of the Mediator complex lacking one or more distinct subunits have been variously termed ARC, CRSP, DRIP, PC2, SMCC and TRAP.

The protein resides in the nucleus. In terms of biological role, component of the Mediator complex, a coactivator involved in the regulated transcription of nearly all RNA polymerase II-dependent genes. Mediator functions as a bridge to convey information from gene-specific regulatory proteins to the basal RNA polymerase II transcription machinery. Mediator is recruited to promoters by direct interactions with regulatory proteins and serves as a scaffold for the assembly of a functional preinitiation complex with RNA polymerase II and the general transcription factors. The protein is Mediator of RNA polymerase II transcription subunit 22 (Med22) of Rattus norvegicus (Rat).